The chain runs to 217 residues: Adapter protein MecA (217 aa).

Belongs to the MecA family. Homodimer.

Enables the recognition and targeting of unfolded and aggregated proteins to the ClpC protease or to other proteins involved in proteolysis. Acts negatively in the development of competence by binding ComK and recruiting it to the ClpCP protease. When overexpressed, inhibits sporulation. Also involved in Spx degradation by ClpC. The polypeptide is Adapter protein MecA (Alkalihalophilus pseudofirmus (strain ATCC BAA-2126 / JCM 17055 / OF4) (Bacillus pseudofirmus)).